The chain runs to 439 residues: Packaging protein 1 (439 aa).

The segment covering 1–23 (MSTQIPARQETYDPSQSSGTKTP) has biased composition (polar residues). A disordered region spans residues 1-42 (MSTQIPARQETYDPSQSSGTKTPSHPYDGNPTRSYPKRNAGK). 151 to 158 (GPTGSGKS) serves as a coordination point for ATP. Positions 419 to 439 (ERNPKLTDLEKLSPPGTFQET) are DNA-binding.

This sequence belongs to the adenoviridae packaging protein 1 family. As to quaternary structure, homodimer. Part of a genome packaging complex composed of packaging proteins 1, 2 and 3; this complex specifically binds to the packaging sequence on the left end of viral genomic DNA and performs packaging of the viral genome. Interacts with protein 33K.

The protein localises to the virion. Its subcellular location is the host nucleus. The protein resides in the host nucleoplasm. It is found in the host nucleolus. Functionally, component of the packaging machinery which encapsidates the viral DNA into preformed capsids and transcriptional activator of the viral major late promoter (MLP). Binds, along with packaging proteins 2 and 3, to the specific packaging sequence on the left end of viral genomic DNA and displays ATPase activity thereby providing the power stroke of the packaging machinery. The activity of packaging protein IVa2 is stimulated by protein 33K which acts as a terminase. May be the protein that pumps DNA into the capsid powered by ATP hydrolysis. Specifically binds to the 5'-CG-3' nucleotides of the repeats making up the packaging sequence. Component of the DEF-A and DEF-B transcription factors that bind downstream elements of the major late promoter (MLP), and stimulate transcription from the MLP after initiation of viral DNA replication. DEF-A is a heterodimer packaging proteins 1 and 2 and DEF-B is a homodimer of packaging protein 1. This chain is Packaging protein 1, found in Fowl adenovirus A serotype 1 (strain CELO / Phelps) (FAdV-1).